Here is a 426-residue protein sequence, read N- to C-terminus: Serine--tRNA ligase (426 aa).

Residue Thr231 to Glu233 coordinates L-serine. Residue Arg262 to Glu264 participates in ATP binding. L-serine is bound at residue Glu285. An ATP-binding site is contributed by Glu349–Ser352. Ser385 contacts L-serine.

It belongs to the class-II aminoacyl-tRNA synthetase family. Type-1 seryl-tRNA synthetase subfamily. As to quaternary structure, homodimer. The tRNA molecule binds across the dimer.

It localises to the cytoplasm. The catalysed reaction is tRNA(Ser) + L-serine + ATP = L-seryl-tRNA(Ser) + AMP + diphosphate + H(+). It catalyses the reaction tRNA(Sec) + L-serine + ATP = L-seryl-tRNA(Sec) + AMP + diphosphate + H(+). It functions in the pathway aminoacyl-tRNA biosynthesis; selenocysteinyl-tRNA(Sec) biosynthesis; L-seryl-tRNA(Sec) from L-serine and tRNA(Sec): step 1/1. In terms of biological role, catalyzes the attachment of serine to tRNA(Ser). Is also able to aminoacylate tRNA(Sec) with serine, to form the misacylated tRNA L-seryl-tRNA(Sec), which will be further converted into selenocysteinyl-tRNA(Sec). The polypeptide is Serine--tRNA ligase (Legionella pneumophila (strain Corby)).